The primary structure comprises 778 residues: Preasperterpenoid A synthase PvPS (778 aa).

The tract at residues 1 to 414 (MAATKKSTAT…HRYNFHKPAA (414 aa)) is terpene cyclase. Positions 176 and 180 each coordinate Mg(2+). Position 176 (aspartate 176) interacts with substrate. The DDXXD 1 signature appears at 176–180 (DDILD). Substrate-binding positions include 266 to 269 (RVIN), asparagine 310, 314 to 318 (SWEKE), and 406 to 407 (RY). Residues 310–318 (NDYFSWEKE) carry the NSE/DTE motif. Over residues 414 to 431 (AKENEDTDDEGAKSDDSK) the composition is skewed to basic and acidic residues. The tract at residues 415-778 (KENEDTDDEG…LRLLLKRLQV (364 aa)) is prenyltransferase. The tract at residues 416-454 (ENEDTDDEGAKSDDSKTTLNDSTDSTVVDVKTPATSGLL) is disordered. Residues lysine 499, arginine 502, and histidine 531 each contribute to the isopentenyl diphosphate site. 2 residues coordinate Mg(2+): aspartate 538 and aspartate 542. Residues 538–542 (DDIED) carry the DDXXD 2 motif. A dimethylallyl diphosphate-binding site is contributed by arginine 547. Arginine 548 serves as a coordination point for isopentenyl diphosphate. Lysine 625, threonine 626, glutamine 662, asparagine 669, lysine 679, and lysine 689 together coordinate dimethylallyl diphosphate.

This sequence in the N-terminal section; belongs to the terpene synthase family. The protein in the C-terminal section; belongs to the FPP/GGPP synthase family. Hexamer. It depends on Mg(2+) as a cofactor.

The catalysed reaction is isopentenyl diphosphate + (2E,6E)-farnesyl diphosphate = (2E,6E,10E)-geranylgeranyl diphosphate + diphosphate. It catalyses the reaction isopentenyl diphosphate + (2E,6E,10E)-geranylgeranyl diphosphate = (2E,6E,10E,14E)-geranylfarnesyl diphosphate + diphosphate. It carries out the reaction (2E,6E,10E,14E)-geranylfarnesyl diphosphate = preasperterpenoid A + diphosphate. It participates in secondary metabolite biosynthesis; terpenoid biosynthesis. Its function is as follows. Bifunctional sesterterpene synthase that possesses both prenyl transferase and terpene cyclase activity, converting isopentenyl diphosphate and dimethylallyl diphosphate into geranylfarnesyl diphosphate (GFPP) and further converting GFPP into preasperterpenoid A. This Talaromyces verruculosus (Penicillium verruculosum) protein is Preasperterpenoid A synthase PvPS.